A 425-amino-acid polypeptide reads, in one-letter code: Lysosome-associated membrane glycoprotein 2 (425 aa).

Residues 1-27 form the signal peptide; the sequence is MAPPRCPAGLALLLLLLGACGFFQSYA. The first lumenal domain stretch occupies residues 28–192; that stretch reads VEVDVKDASN…SKKESRCYAD (165 aa). The Lumenal segment spans residues 28-389; the sequence is VEVDVKDASN…EECFADSDLN (362 aa). Asn37, Asn56, Asn62, Asn74, Asn100, Asn105, Asn120, Asn163, Asn170, Asn179, Asn206, Asn232, Asn239, Asn252, Asn276, Asn287, Asn298, Asn312, Asn320, and Asn331 each carry an N-linked (GlcNAc...) asparagine glycan. An intrachain disulfide couples Cys40 to Cys78. Cys153 and Cys189 are oxidised to a cystine. Positions 193–238 are hinge; the sequence is TPTAAPTVLPTVANVTTASTTISPAPTTAPKPAENPVTGNYSLKTG. The segment at 239-390 is second lumenal domain; it reads NKTCLLATVG…ECFADSDLNF (152 aa). A disulfide bridge links Cys242 with Cys274. Cys345 and Cys382 are oxidised to a cystine. A helical transmembrane segment spans residues 390–414; that stretch reads FLIPVAVGMALGFLIILVFISYIIG. At 415–425 the chain is on the cytoplasmic side; the sequence is RRKSRTGYQSV. Residues 416-419 are important for binding and subsequent lysosomal degradation of target proteins; sequence RKSR.

Belongs to the LAMP family. Monomer. Forms large homooligomers. Post-translationally, extensively N-glycosylated. Contains a minor proportion of O-linked glycans.

It localises to the lysosome membrane. Its subcellular location is the endosome membrane. The protein resides in the cell membrane. It is found in the cytoplasmic vesicle. The protein localises to the autophagosome membrane. In terms of biological role, lysosomal membrane glycoprotein which plays an important role in lysosome biogenesis, lysosomal pH regulation and autophagy. Plays an important role in chaperone-mediated autophagy, a process that mediates lysosomal degradation of proteins in response to various stresses and as part of the normal turnover of proteins with a long biological half-live. In the chaperone-mediated autophagy, acts downstream of chaperones, such as HSPA8/HSC70, which recognize and bind substrate proteins and mediate their recruitment to lysosomes, where target proteins bind LAMP2. Plays a role in lysosomal protein degradation in response to starvation. Required for the fusion of autophagosomes with lysosomes during autophagy. The sequence is that of Lysosome-associated membrane glycoprotein 2 (LAMP2) from Gallus gallus (Chicken).